We begin with the raw amino-acid sequence, 427 residues long: MRDDSGPPLEEDQARPPRALPPVPSAIQVCSSFVENNSRMDQQDDLVGEDDIPLSHPKKKKSRTKSSLATASSEGHAEPVVNRRAEGSEPPAAELKEHPEAPAPRRQKKIRPPPELETSLTERPSSPSLLRNENGIDAEPREEAVIPKPRRKAKKTQPAEPQYASELGVEDEDILTDEQSTLEHHSRFTAPTGVSQPVGKVFVEKSRRFQAADRSELIKTTENIDVSMDVKPSWTTRDVALSVHRAFRMVGLFSHGFLAGCAVWNTVVIYVLAGDQLSNVSNLLQQYKPLAYPFQSLLYLLLALSTVSAFDRTDFAKISVAIRNFLALEPTALASFLYFTALILSLSQQMTSDRIHLYEPSVNGSLWAAEAEEPILVPWIIVNLVVALLVGLSWLFLSYRPGMDLSEELMFFSDVDEHPETGTKASP.

The segment at 1–172 is disordered; it reads MRDDSGPPLE…YASELGVEDE (172 aa). Phosphoserine is present on S25. Residues 28–40 show a composition bias toward polar residues; it reads QVCSSFVENNSRM. Over residues 43–52 the composition is skewed to acidic residues; that stretch reads QDDLVGEDDI. S72 is subject to Phosphoserine. The segment covering 75–87 has biased composition (basic and acidic residues); the sequence is GHAEPVVNRRAEG. Residues 118–131 show a composition bias toward polar residues; sequence TSLTERPSSPSLLR. Transmembrane regions (helical) follow at residues 252–272, 290–310, 325–345, and 375–395; these read LFSH…IYVL, LAYP…VSAF, FLAL…LILS, and ILVP…LSWL.

It belongs to the TMEM237 family. Part of the tectonic-like complex (also named B9 complex). Interacts with TMEM107.

The protein resides in the membrane. It is found in the cell projection. Its subcellular location is the cilium. Its function is as follows. Component of the transition zone in primary cilia. Required for ciliogenesis. The sequence is that of Transmembrane protein 237 (Tmem237) from Mus musculus (Mouse).